Reading from the N-terminus, the 101-residue chain is MEYIYASLLLHSAGKEITEDAVKAVLSAAGVEVEDARVKALVAALEGVDIEEAIEKAAMPVAAAAAPAAAPAEEPKEEKKEEKKEEDTTAAAAAGLGALFG.

A disordered region spans residues 65-89 (AAPAAAPAEEPKEEKKEEKKEEDTT). Basic and acidic residues predominate over residues 73–87 (EEPKEEKKEEKKEED).

It belongs to the eukaryotic ribosomal protein P1/P2 family. In terms of assembly, part of the 50S ribosomal subunit. Homodimer, it forms part of the ribosomal stalk which helps the ribosome interact with GTP-bound translation factors. Forms a heptameric uL10/P0(P1)2(P1)2(P1)2 complex, where uL10/P0 forms an elongated spine to which the P1 dimers bind in a sequential fashion.

Its function is as follows. Forms part of the ribosomal stalk, playing a central role in the interaction of the ribosome with GTP-bound translation factors. This is Large ribosomal subunit protein P1 from Methanothermococcus thermolithotrophicus (Methanococcus thermolithotrophicus).